The following is a 361-amino-acid chain: tRNA/tmRNA (uracil-C(5))-methyltransferase (361 aa).

S-adenosyl-L-methionine is bound by residues Gln183, Tyr211, Asn216, Glu232, and Asp294. The active-site Nucleophile is the Cys319. The Proton acceptor role is filled by Glu353.

It belongs to the class I-like SAM-binding methyltransferase superfamily. RNA M5U methyltransferase family. TrmA subfamily.

The catalysed reaction is uridine(54) in tRNA + S-adenosyl-L-methionine = 5-methyluridine(54) in tRNA + S-adenosyl-L-homocysteine + H(+). It catalyses the reaction uridine(341) in tmRNA + S-adenosyl-L-methionine = 5-methyluridine(341) in tmRNA + S-adenosyl-L-homocysteine + H(+). In terms of biological role, dual-specificity methyltransferase that catalyzes the formation of 5-methyluridine at position 54 (m5U54) in all tRNAs, and that of position 341 (m5U341) in tmRNA (transfer-mRNA). The polypeptide is tRNA/tmRNA (uracil-C(5))-methyltransferase (Acinetobacter baylyi (strain ATCC 33305 / BD413 / ADP1)).